Consider the following 246-residue polypeptide: uncharacterized protein (246 aa).

A helical transmembrane segment spans residues 7–29; the sequence is GRGALASTGGCVVLAVAALMFVF.

It is found in the membrane. This is an uncharacterized protein from Treponema pallidum (strain Nichols).